The chain runs to 70 residues: UPF0270 protein VIBHAR_00073 (70 aa).

This sequence belongs to the UPF0270 family.

In Vibrio campbellii (strain ATCC BAA-1116), this protein is UPF0270 protein VIBHAR_00073.